A 485-amino-acid chain; its full sequence is Probable high-affinity nitrate transporter 2.4 (485 aa).

Transmembrane regions (helical) follow at residues 56 to 76 (WMSLFACFFAAFAAPPILPAM), 80 to 100 (LVLAPSDASAAAVASLSATLV), 119 to 139 (GVASLVCALALALAAVFASSP), 147 to 167 (FVAGLSLANFVANQHWMSRIF), 177 to 197 (AVAAGWANVGSAAAQVVMPVA), 215 to 235 (VTYLLPCAMLVTTGLAVLAFP), 270 to 290 (AWLLGLTYGHCYGVELIMENV), 305 to 327 (AAGAAAACFGAMNAVARPAGGVA), 341 to 361 (LWALWAVQSAGAALCVLVGRM), 377 to 397 (VACAAFVQAASGLTFGIVPFV), 405 to 425 (VSGMTASGGAVGAIVTNRLFF), and 435 to 455 (AISCTGITSLLCTLPVALIHF).

The protein belongs to the major facilitator superfamily. Nitrate/nitrite porter (TC 2.A.1.8) family. As to expression, expressed in the base of the lateral root primordia, root-shoot junction zone, leaves, ends of the husk and vascular tissue of the anthers.

The protein localises to the cell membrane. Its function is as follows. Involved in nitrate transport. This is Probable high-affinity nitrate transporter 2.4 (NRT2.4) from Oryza sativa subsp. japonica (Rice).